The following is a 1018-amino-acid chain: D-2-hydroxyglutarate dehydrogenase (1018 aa).

Positions 48–281 (YQLLPDAVVF…TEARLDITRL (234 aa)) constitute an FAD-binding PCMH-type domain. (R)-2-hydroxyglutarate contacts are provided by R402 and H500. The region spanning 662-695 (FSHEVKEAMSGCLACKACSTQCPIKIDVPEFRSR) is the 4Fe-4S ferredoxin-type domain. 4 residues coordinate [4Fe-4S] cluster: C673, C676, C679, and C683.

It in the N-terminal section; belongs to the FAD-binding oxidoreductase/transferase type 4 family. Homotetramer. The cofactor is [4Fe-4S] cluster. It depends on FAD as a cofactor.

The catalysed reaction is (R)-2-hydroxyglutarate + A = 2-oxoglutarate + AH2. With respect to regulation, activity is completely inhibited by the addition of 0.5 mM Mn(2+), Ni(2+), or Co(2+) and partially inhibited by 0.5 mM Zn(2+). Catalyzes the oxidation of D-2-hydroxyglutarate (D-2-HGA) to 2-oxoglutarate. Appears to be the only D2HGDH in E.coli, providing the way to recycle D-2-HGA produced during L-serine synthesis by SerA, by converting it back to 2-oxoglutarate. The physiological molecule that functions as the primary electron acceptor during D-2-HGA oxidation by YdiJ in E.coli is unknown. Shows strict substrate specificity towards D-2-HGA, since it has no detectable activity on L-2-hydroxyglutarate, L-malate, D-malate, L-lactate, D-lactate, L-tartrate, D-tartrate, L-glycerate, D-glycerate, glutarate, or pyruvate. The sequence is that of D-2-hydroxyglutarate dehydrogenase (ydiJ) from Escherichia coli (strain K12).